We begin with the raw amino-acid sequence, 163 residues long: Large ribosomal subunit protein uL10 (163 aa).

This sequence belongs to the universal ribosomal protein uL10 family. Part of the ribosomal stalk of the 50S ribosomal subunit. The N-terminus interacts with L11 and the large rRNA to form the base of the stalk. The C-terminus forms an elongated spine to which L12 dimers bind in a sequential fashion forming a multimeric L10(L12)X complex.

Its function is as follows. Forms part of the ribosomal stalk, playing a central role in the interaction of the ribosome with GTP-bound translation factors. This chain is Large ribosomal subunit protein uL10 (rplJ), found in Pasteurella multocida (strain Pm70).